Here is a 332-residue protein sequence, read N- to C-terminus: tRNA-dihydrouridine(20/20a) synthase (332 aa).

FMN contacts are provided by residues 22-24 (PMM) and Gln75. The active-site Proton donor is Cys105. FMN contacts are provided by residues Lys144, His177, 217 to 219 (NGG), and 239 to 240 (GR).

Belongs to the Dus family. DusA subfamily. It depends on FMN as a cofactor.

It carries out the reaction 5,6-dihydrouridine(20) in tRNA + NADP(+) = uridine(20) in tRNA + NADPH + H(+). The catalysed reaction is 5,6-dihydrouridine(20) in tRNA + NAD(+) = uridine(20) in tRNA + NADH + H(+). It catalyses the reaction 5,6-dihydrouridine(20a) in tRNA + NADP(+) = uridine(20a) in tRNA + NADPH + H(+). The enzyme catalyses 5,6-dihydrouridine(20a) in tRNA + NAD(+) = uridine(20a) in tRNA + NADH + H(+). Its function is as follows. Catalyzes the synthesis of 5,6-dihydrouridine (D), a modified base found in the D-loop of most tRNAs, via the reduction of the C5-C6 double bond in target uridines. Specifically modifies U20 and U20a in tRNAs. The sequence is that of tRNA-dihydrouridine(20/20a) synthase from Xylella fastidiosa (strain Temecula1 / ATCC 700964).